The chain runs to 500 residues: Glycerol-3-phosphate acyltransferase 7 (500 aa).

Helical transmembrane passes span 38-58 and 235-255; these read GLIRFATLLFLWPIIALLDVL and ALIILLWIPFGIILAMIRIFV. Positions 298-303 match the HXXXXD motif motif; that stretch reads HRTLMD.

The protein belongs to the GPAT/DAPAT family. As to expression, weakly or not expressed in roots, leaves, seedlings, developing siliques and flower buds.

The protein resides in the membrane. It carries out the reaction sn-glycerol 3-phosphate + an acyl-CoA = a 1-acyl-sn-glycero-3-phosphate + CoA. It participates in phospholipid metabolism; CDP-diacylglycerol biosynthesis; CDP-diacylglycerol from sn-glycerol 3-phosphate: step 1/3. In terms of biological role, esterifies acyl-group from acyl-ACP to the sn-1 position of glycerol-3-phosphate, an essential step in glycerolipid biosynthesis. In Arabidopsis thaliana (Mouse-ear cress), this protein is Glycerol-3-phosphate acyltransferase 7 (GPAT7).